A 1181-amino-acid polypeptide reads, in one-letter code: C5a peptidase (1181 aa).

An N-terminal signal peptide occupies residues 1–31 (MRKKQKLPFDKLAIALMSTSILLNAQSDIKA). The segment covering 33 to 52 (TVTEDTPATEQAVETPQPTA) has biased composition (polar residues). The tract at residues 33 to 117 (TVTEDTPATE…PSQVKTLQEK (85 aa)) is disordered. Residues 70–81 (DDAEETIADDAN) show a composition bias toward acidic residues. Residues 99 to 581 (KATIRDLNDP…AGAVDAKKAS (483 aa)) enclose the Peptidase S8 domain. Active-site charge relay system residues include aspartate 130, histidine 193, and serine 512. Basic and acidic residues-rich tracts occupy residues 1029-1054 (EGHS…KPEQ), 1061-1071 (PDKKPETKPEQ), 1078-1088 (PDKKPETKPEQ), and 1095-1107 (PDKK…EKDS). The interval 1029–1150 (EGHSNKPEQD…KDQLPTTNDK (122 aa)) is disordered. Repeat copies occupy residues 1034 to 1050 (KPEQ…KPET), 1051 to 1067 (KPEQ…KPET), 1068 to 1084 (KPEQ…KPET), 1085 to 1101 (KPEQ…KPET), and 1102 to 1118 (KPEK…TPQK). The interval 1034–1118 (KPEQDGSDQA…GQTPGKTPQK (85 aa)) is 5 X 17 AA tandem repeats. Composition is skewed to polar residues over residues 1109 to 1123 (GQTP…QPSR) and 1137 to 1147 (KASTKDQLPTT). An LPXTG sorting signal motif is present at residues 1144-1148 (LPTTN). Threonine 1147 bears the Pentaglycyl murein peptidoglycan amidated threonine mark. A propeptide spans 1148 to 1181 (NDKDTNRLHLLKLVMTTFFLGLVAHIFKTKRTED) (removed by sortase).

This sequence belongs to the peptidase S8 family. Post-translationally, cleaved by SpeB protease; leading to its degradation. Degradation by SpeB is probably strictly regulated to preserve integrity of C5a peptidase.

Its subcellular location is the secreted. It localises to the cell wall. The enzyme catalyses The primary cleavage site is at 67-His-|-Lys-68 in human C5a with a minor secondary cleavage site at 58-Ala-|-Ser-59.. This virulence factor of S.pyogenes specifically cleaves the human serum chemotaxin C5a at '68-Lys-|-Asp-69' bond near its C-terminus, destroying its ability to serve as a chemoattractant. The protein is C5a peptidase (scpA) of Streptococcus pyogenes serotype M1.